The following is a 288-amino-acid chain: Protoheme IX farnesyltransferase (288 aa).

The next 9 helical transmembrane spans lie at 8–28 (ATKP…FLLA), 35–55 (YLIF…GCVL), 80–100 (ISIL…IYLL), 107–127 (LTML…TKCM), 132–152 (IYST…GYCA), 162–182 (LLLL…IAIL), 208–228 (IVIY…SGYT), 229–249 (TSYQ…YLAL), and 266–286 (FIFS…DSIF).

Belongs to the UbiA prenyltransferase family. Protoheme IX farnesyltransferase subfamily.

It is found in the cell membrane. It carries out the reaction heme b + (2E,6E)-farnesyl diphosphate + H2O = Fe(II)-heme o + diphosphate. It functions in the pathway porphyrin-containing compound metabolism; heme O biosynthesis; heme O from protoheme: step 1/1. Its function is as follows. Converts heme B (protoheme IX) to heme O by substitution of the vinyl group on carbon 2 of heme B porphyrin ring with a hydroxyethyl farnesyl side group. The sequence is that of Protoheme IX farnesyltransferase from Baumannia cicadellinicola subsp. Homalodisca coagulata.